We begin with the raw amino-acid sequence, 278 residues long: Endoplasmic reticulum junction formation protein lunapark (278 aa).

Topologically, residues 1–45 are cytoplasmic; that stretch reads MFSALGKWVRGSRNDKDFVTKYTADLSQITSQIHQLDVALKKSQS. Residues 46–66 traverse the membrane as a helical segment; it reads ILSQWQSNLTFYGIALTVLAL. Topologically, residues 67-77 are lumenal; that stretch reads SYTYWEYHGYR. The helical transmembrane segment at 78–98 threads the bilayer; that stretch reads PYLVVTALLCIGSLILFKWAL. Topologically, residues 99–278 are cytoplasmic; it reads TKLYAFYNNN…PSQSEKEKTK (180 aa). Residues 107-183 adopt a coiled-coil conformation; sequence NNRLRKLAKL…ELEKFKKESH (77 aa). Residues 223–247 form a C4-type; plays a role in ER morphology zinc finger; that stretch reads CPQCHWKSNCYRLASKPIIFICPHC. The disordered stretch occupies residues 258–278; it reads EDAIEAKQPAQPSQSEKEKTK.

It belongs to the lunapark family. As to quaternary structure, interacts with RTN1; this interaction is negatively regulated by SEY1. Interacts with SEY1 and YOP1.

Its subcellular location is the endoplasmic reticulum membrane. Plays a role in tubular endoplasmic reticulum network formation and maintenance. Works in conjunction with the ER shaping proteins (reticulons RTN1 and RTN2, YOP1), and in antagonism to SEY1 to maintain the network in a dynamic equilibrium. May counterbalance SEY1-directed polygon formation by promoting polygon loss through ring closure. This chain is Endoplasmic reticulum junction formation protein lunapark (LNP1), found in Saccharomyces cerevisiae (strain ATCC 204508 / S288c) (Baker's yeast).